A 271-amino-acid polypeptide reads, in one-letter code: Formamidopyrimidine-DNA glycosylase (271 aa).

The active-site Schiff-base intermediate with DNA is Pro2. Glu3 acts as the Proton donor in catalysis. Lys58 (proton donor; for beta-elimination activity) is an active-site residue. Positions 110 and 152 each coordinate DNA. Residues 237 to 271 form an FPG-type zinc finger; sequence AVYGQTGKPCTVCGTPIARIRLGNRSTWFCPVCQK. The Proton donor; for delta-elimination activity role is filled by Arg261.

The protein belongs to the FPG family. In terms of assembly, monomer. Zn(2+) is required as a cofactor.

The enzyme catalyses Hydrolysis of DNA containing ring-opened 7-methylguanine residues, releasing 2,6-diamino-4-hydroxy-5-(N-methyl)formamidopyrimidine.. It catalyses the reaction 2'-deoxyribonucleotide-(2'-deoxyribose 5'-phosphate)-2'-deoxyribonucleotide-DNA = a 3'-end 2'-deoxyribonucleotide-(2,3-dehydro-2,3-deoxyribose 5'-phosphate)-DNA + a 5'-end 5'-phospho-2'-deoxyribonucleoside-DNA + H(+). In terms of biological role, involved in base excision repair of DNA damaged by oxidation or by mutagenic agents. Acts as a DNA glycosylase that recognizes and removes damaged bases. Has a preference for oxidized purines, such as 7,8-dihydro-8-oxoguanine (8-oxoG). Has AP (apurinic/apyrimidinic) lyase activity and introduces nicks in the DNA strand. Cleaves the DNA backbone by beta-delta elimination to generate a single-strand break at the site of the removed base with both 3'- and 5'-phosphates. The chain is Formamidopyrimidine-DNA glycosylase from Geobacter sulfurreducens (strain ATCC 51573 / DSM 12127 / PCA).